The sequence spans 196 residues: GTP cyclohydrolase 1 (196 aa).

Residues cysteine 86, histidine 89, and cysteine 157 each coordinate Zn(2+).

The protein belongs to the GTP cyclohydrolase I family. In terms of assembly, toroid-shaped homodecamer, composed of two pentamers of five dimers.

The enzyme catalyses GTP + H2O = 7,8-dihydroneopterin 3'-triphosphate + formate + H(+). It participates in cofactor biosynthesis; 7,8-dihydroneopterin triphosphate biosynthesis; 7,8-dihydroneopterin triphosphate from GTP: step 1/1. This chain is GTP cyclohydrolase 1, found in Parabacteroides distasonis (strain ATCC 8503 / DSM 20701 / CIP 104284 / JCM 5825 / NCTC 11152).